Reading from the N-terminus, the 201-residue chain is Holliday junction resolvase RecU (201 aa).

4 residues coordinate Mg(2+): Thr87, Asp89, Glu102, and Gln121.

This sequence belongs to the RecU family. Requires Mg(2+) as cofactor.

It localises to the cytoplasm. The enzyme catalyses Endonucleolytic cleavage at a junction such as a reciprocal single-stranded crossover between two homologous DNA duplexes (Holliday junction).. Its function is as follows. Endonuclease that resolves Holliday junction intermediates in genetic recombination. Cleaves mobile four-strand junctions by introducing symmetrical nicks in paired strands. Promotes annealing of linear ssDNA with homologous dsDNA. Required for DNA repair, homologous recombination and chromosome segregation. This Listeria welshimeri serovar 6b (strain ATCC 35897 / DSM 20650 / CCUG 15529 / CIP 8149 / NCTC 11857 / SLCC 5334 / V8) protein is Holliday junction resolvase RecU.